The primary structure comprises 334 residues: Phenylalanine--tRNA ligase alpha subunit (334 aa).

Glu249 provides a ligand contact to Mg(2+).

This sequence belongs to the class-II aminoacyl-tRNA synthetase family. Phe-tRNA synthetase alpha subunit type 1 subfamily. As to quaternary structure, tetramer of two alpha and two beta subunits. Mg(2+) is required as a cofactor.

It localises to the cytoplasm. The catalysed reaction is tRNA(Phe) + L-phenylalanine + ATP = L-phenylalanyl-tRNA(Phe) + AMP + diphosphate + H(+). This Desulfatibacillum aliphaticivorans protein is Phenylalanine--tRNA ligase alpha subunit.